We begin with the raw amino-acid sequence, 864 residues long: DNA mismatch repair protein MutS (864 aa).

Residue 623 to 630 (GPNMGGKS) coordinates ATP.

The protein belongs to the DNA mismatch repair MutS family.

In terms of biological role, this protein is involved in the repair of mismatches in DNA. It is possible that it carries out the mismatch recognition step. This protein has a weak ATPase activity. The polypeptide is DNA mismatch repair protein MutS (Polaromonas sp. (strain JS666 / ATCC BAA-500)).